A 297-amino-acid chain; its full sequence is Acetylglutamate kinase (297 aa).

Substrate-binding positions include glycine 70–glycine 71, arginine 92, and asparagine 194.

This sequence belongs to the acetylglutamate kinase family. ArgB subfamily.

It localises to the cytoplasm. It carries out the reaction N-acetyl-L-glutamate + ATP = N-acetyl-L-glutamyl 5-phosphate + ADP. It functions in the pathway amino-acid biosynthesis; L-arginine biosynthesis; N(2)-acetyl-L-ornithine from L-glutamate: step 2/4. Functionally, catalyzes the ATP-dependent phosphorylation of N-acetyl-L-glutamate. This is Acetylglutamate kinase from Herminiimonas arsenicoxydans.